Reading from the N-terminus, the 406-residue chain is Glutamyl-tRNA(Gln) amidotransferase subunit D (406 aa).

One can recognise an Asparaginase/glutaminase domain in the interval 68-390 (KSISILATGG…EEFINVFNRN (323 aa)). Active-site residues include T78, T152, D153, and K230.

The protein belongs to the asparaginase 1 family. GatD subfamily. Heterodimer of GatD and GatE.

The enzyme catalyses L-glutamyl-tRNA(Gln) + L-glutamine + ATP + H2O = L-glutaminyl-tRNA(Gln) + L-glutamate + ADP + phosphate + H(+). Functionally, allows the formation of correctly charged Gln-tRNA(Gln) through the transamidation of misacylated Glu-tRNA(Gln) in organisms which lack glutaminyl-tRNA synthetase. The reaction takes place in the presence of glutamine and ATP through an activated gamma-phospho-Glu-tRNA(Gln). The GatDE system is specific for glutamate and does not act on aspartate. The protein is Glutamyl-tRNA(Gln) amidotransferase subunit D of Thermoplasma volcanium (strain ATCC 51530 / DSM 4299 / JCM 9571 / NBRC 15438 / GSS1).